A 195-amino-acid chain; its full sequence is Cysteine/O-acetylserine efflux protein (195 aa).

The Periplasmic segment spans residues 1–7 (MTPTLLS). A helical transmembrane segment spans residues 8 to 28 (AFWTYTLITAMTPGPNNILAL). Over 29–46 (SSATSHGFRQSTRVLAGM) the chain is Cytoplasmic. A helical transmembrane segment spans residues 47–67 (SLGFLIVMLLCAGISFSLAVI). The Periplasmic portion of the chain corresponds to 68–69 (DP). Residues 70-90 (AAVHLLSWAGAAYIVWLAWKI) form a helical membrane-spanning segment. Topologically, residues 91–104 (ATSPTKEDGLQAKP) are cytoplasmic. A helical membrane pass occupies residues 105-125 (ISFWASFALQFVNVKIILYGV). Residues 126–141 (TALSTFVLPQTQALSW) are Periplasmic-facing. A helical membrane pass occupies residues 142-162 (VVGVSVLLAMIGTFGNVCWAL). At 163–176 (AGHLFQRLFRQYGR) the chain is on the cytoplasmic side. The helical transmembrane segment at 177–194 (QLNIVLALLLIYCAVRIF) threads the bilayer. Tyrosine 195 is a topological domain (periplasmic).

The protein belongs to the Rht family.

Its subcellular location is the cell inner membrane. The enzyme catalyses O-acetyl-L-serine(in) = O-acetyl-L-serine(out). It catalyses the reaction L-cysteine(in) = L-cysteine(out). Functionally, exporter of O-acetylserine (OAS) and cysteine. This Escherichia coli O139:H28 (strain E24377A / ETEC) protein is Cysteine/O-acetylserine efflux protein (eamB).